The chain runs to 369 residues: Peptide chain release factor 2 (369 aa).

N5-methylglutamine is present on glutamine 249.

Belongs to the prokaryotic/mitochondrial release factor family. Post-translationally, methylated by PrmC. Methylation increases the termination efficiency of RF2.

It localises to the cytoplasm. In terms of biological role, peptide chain release factor 2 directs the termination of translation in response to the peptide chain termination codons UGA and UAA. This chain is Peptide chain release factor 2, found in Corynebacterium diphtheriae (strain ATCC 700971 / NCTC 13129 / Biotype gravis).